The chain runs to 169 residues: Regulator of sigma D (169 aa).

It belongs to the Rsd/AlgQ family. Interacts with RpoD.

It is found in the cytoplasm. Its function is as follows. Binds RpoD and negatively regulates RpoD-mediated transcription activation by preventing the interaction between the primary sigma factor RpoD with the catalytic core of the RNA polymerase and with promoter DNA. May be involved in replacement of the RNA polymerase sigma subunit from RpoD to RpoS during the transition from exponential growth to the stationary phase. In Yersinia pseudotuberculosis serotype O:1b (strain IP 31758), this protein is Regulator of sigma D.